A 698-amino-acid polypeptide reads, in one-letter code: Ubiquitin-like modifier-activating enzyme ATG7 (698 aa).

Positions 11-13 (FAP) match the FAP motif motif. Lys-41 is covalently cross-linked (Glycyl lysine isopeptide (Lys-Gly) (interchain with G-Cter in ubiquitin)). The active-site Glycyl thioester intermediate is the Cys-567. Position 693 is a phosphoserine (Ser-693).

The protein belongs to the ATG7 family. Homodimer. Interacts with ATG3; this interaction is essential for the transfer of ATG8-like proteins's thioester from ATG7 to ATG3 and plays a role in the conjugation of ATG12 to ATG5. Interacts with ATG12. Forms intermediate conjugates with GABARAPL1. Forms intermediate conjugates with ATG8-like proteins such as GABARAP, GABARAPL2 or MAP1LC3A. Interacts with EP300 acetyltransferase. Interacts with FOXO1. In terms of processing, acetylated by EP300. Post-translationally, polyubiquitinated on Lys-41 via 'Lys-63'-linked ubiquitin by TRIM32; this modification positiely regulates ATG8 and ATG12 activating enzyme activity leading to initiation of autophagy under metabolic stress. As to expression, widely expressed.

It localises to the cytoplasm. Its subcellular location is the preautophagosomal structure. In terms of biological role, E1-like activating enzyme involved in the 2 ubiquitin-like systems required for cytoplasm to vacuole transport (Cvt) and autophagy. Activates ATG12 for its conjugation with ATG5 as well as the ATG8 family proteins for their conjugation with phosphatidylethanolamine. Both systems are needed for the ATG8 association to Cvt vesicles and autophagosomes membranes. Required for autophagic death induced by caspase-8 inhibition. Facilitates LC3-I lipidation with phosphatidylethanolamine to form LC3-II which is found on autophagosomal membranes. Required for mitophagy which contributes to regulate mitochondrial quantity and quality by eliminating the mitochondria to a basal level to fulfill cellular energy requirements and preventing excess ROS production. Modulates p53/TP53 activity to regulate cell cycle and survival during metabolic stress. Also plays a key role in the maintenance of axonal homeostasis, the prevention of axonal degeneration, the maintenance of hematopoietic stem cells, the formation of Paneth cell granules, as well as in adipose differentiation. Plays a role in regulating the liver clock and glucose metabolism by mediating the autophagic degradation of CRY1 (clock repressor) in a time-dependent manner. This chain is Ubiquitin-like modifier-activating enzyme ATG7, found in Rattus norvegicus (Rat).